A 172-amino-acid polypeptide reads, in one-letter code: RNA silencing suppressor p19 (172 aa).

A compositionally biased stretch (basic and acidic residues) spans 1 to 20; it reads MERAIQGNDTREQANGERWD. The disordered stretch occupies residues 1–27; it reads MERAIQGNDTREQANGERWDGGSGGIT.

This sequence belongs to the tombusvirus protein p19 family. In terms of assembly, homodimer.

In terms of biological role, acts as a suppressor of RNA-mediated gene silencing, also known as post-transcriptional gene silencing (PTGS), a mechanism of plant viral defense that limits the accumulation of viral RNAs. Binds to short interfering RNAs (siRNAs) with high affinity. Acts as a molecular caliper to specifically select siRNAs based on the length of the duplex region of the RNA. The chain is RNA silencing suppressor p19 from Dianthus caryophyllus (Carnation).